We begin with the raw amino-acid sequence, 169 residues long: Cell division inhibitor SulA (169 aa).

The interval 106 to 112 is ftsZ binding; sequence ALRTGNY. Positions 162–169 are lon protease binding; sequence KIHSNLYH.

The protein belongs to the SulA family. In terms of assembly, interacts with FtsZ. Is rapidly cleaved and degraded by the Lon protease once DNA damage is repaired.

Functionally, component of the SOS system and an inhibitor of cell division. Accumulation of SulA causes rapid cessation of cell division and the appearance of long, non-septate filaments. In the presence of GTP, binds a polymerization-competent form of FtsZ in a 1:1 ratio, thus inhibiting FtsZ polymerization and therefore preventing it from participating in the assembly of the Z ring. This mechanism prevents the premature segregation of damaged DNA to daughter cells during cell division. The polypeptide is Cell division inhibitor SulA (Salmonella agona (strain SL483)).